The primary structure comprises 159 residues: SsrA-binding protein (159 aa).

Positions 134–159 are disordered; sequence KLHDKRETSKERDWNRQKNRLLKERG. Over residues 137-159 the composition is skewed to basic and acidic residues; the sequence is DKRETSKERDWNRQKNRLLKERG.

It belongs to the SmpB family.

It localises to the cytoplasm. Its function is as follows. Required for rescue of stalled ribosomes mediated by trans-translation. Binds to transfer-messenger RNA (tmRNA), required for stable association of tmRNA with ribosomes. tmRNA and SmpB together mimic tRNA shape, replacing the anticodon stem-loop with SmpB. tmRNA is encoded by the ssrA gene; the 2 termini fold to resemble tRNA(Ala) and it encodes a 'tag peptide', a short internal open reading frame. During trans-translation Ala-aminoacylated tmRNA acts like a tRNA, entering the A-site of stalled ribosomes, displacing the stalled mRNA. The ribosome then switches to translate the ORF on the tmRNA; the nascent peptide is terminated with the 'tag peptide' encoded by the tmRNA and targeted for degradation. The ribosome is freed to recommence translation, which seems to be the essential function of trans-translation. The polypeptide is SsrA-binding protein (Rhizobium meliloti (strain 1021) (Ensifer meliloti)).